A 189-amino-acid chain; its full sequence is Elongation factor P (189 aa).

Belongs to the elongation factor P family.

It localises to the cytoplasm. It participates in protein biosynthesis; polypeptide chain elongation. Its function is as follows. Involved in peptide bond synthesis. Stimulates efficient translation and peptide-bond synthesis on native or reconstituted 70S ribosomes in vitro. Probably functions indirectly by altering the affinity of the ribosome for aminoacyl-tRNA, thus increasing their reactivity as acceptors for peptidyl transferase. In Xanthobacter autotrophicus (strain ATCC BAA-1158 / Py2), this protein is Elongation factor P.